The following is a 578-amino-acid chain: Sulfite reductase [NADPH] hemoprotein beta-component (578 aa).

Polar residues predominate over residues 1-11; that stretch reads MSANQQSNSQE. Residues 1–20 are disordered; that stretch reads MSANQQSNSQEVLGEVLGPL. [4Fe-4S] cluster is bound by residues Cys-441, Cys-447, Cys-487, and Cys-491. Residue Cys-491 participates in siroheme binding.

The protein belongs to the nitrite and sulfite reductase 4Fe-4S domain family. In terms of assembly, alpha(8)-beta(8). The alpha component is a flavoprotein, the beta component is a hemoprotein. The cofactor is siroheme. [4Fe-4S] cluster serves as cofactor.

The enzyme catalyses hydrogen sulfide + 3 NADP(+) + 3 H2O = sulfite + 3 NADPH + 4 H(+). It participates in sulfur metabolism; hydrogen sulfide biosynthesis; hydrogen sulfide from sulfite (NADPH route): step 1/1. In terms of biological role, component of the sulfite reductase complex that catalyzes the 6-electron reduction of sulfite to sulfide. This is one of several activities required for the biosynthesis of L-cysteine from sulfate. The protein is Sulfite reductase [NADPH] hemoprotein beta-component of Vibrio campbellii (strain ATCC BAA-1116).